We begin with the raw amino-acid sequence, 152 residues long: MAIWVDADACPNVIKEILFRAAERTQTPLTLVANQPLRVPPSRFIRTLRVEQGFDVADNEIVRQCAAGDLVITADIPLAAEVLAKGGAALNPRGERYSEASIRERLTMRDFMETLRASGVQTGGPDSLSQRDRQQFAAELEKWLLAVKRRQG.

It belongs to the UPF0178 family.

This Klebsiella pneumoniae subsp. pneumoniae (strain ATCC 700721 / MGH 78578) protein is UPF0178 protein KPN78578_03210.